The primary structure comprises 1151 residues: MRKFNIRKVLDGLTAGSSSASQQQQQQHPPGNREPEIQETLQSEHFQLCKTVRHGFPYQPSALAFDPVQKILAVGTQTGALRLFGRPGVECYCQHDSGAAVIQLQFLINEGALVSALADDTLHLWNLRQKRPAILHSLKFCRERVTFCHLPFQSKWLYVGTERGNIHIVNVESFTLSGYVIMWNKAIELSSKSHPGPVVHISDNPMDEGKLLIGFESGTVVLWDLKSKKADYRYTYDEAIHSVAWHHEGKQFICSHSDGTLTIWNVRSPAKPVQTITPHGKQLKDGKKPEPCKPILKVEFKTTRSGEPFIILSGGLSYDTVGRRPCLTVMHGKSTAVLEMDYSIVDFLTLCETPYPNDFQEPYAVVVLLEKDLVLIDLAQNGYPIFENPYPLSIHESPVTCCEYFADCPVDLIPALYSVGARQKRQGYSKKEWPINGGNWGLGAQSYPEIIITGHADGSVKFWDASAITLQVLYKLKTSKVFEKSRNKDDRPNTDIVDEDPYAIQIISWCPESRMLCIAGVSAHVIIYRFSKQEVITEVIPMLEVRLLYEINDVETPEGEQPPPLPTPVGGSNPQPIPPQSHPSTSSSSSDGLRDNVPCLKVKNSPLKQSPGYQTELVIQLVWVGGEPPQQITSLAVNSSYGLVVFGNCNGIAMVDYLQKAVLLNLGTIELYGSNDPYRREPRSPRKSRQPSGAGLCDISEGTVVPEDRCKSPTSGSSSPHNSDDEQKMNNFIEKVKTKSRKFSKMVANDIAKMSRKLSLPTDLKPDLDVKDNSFSRSRSSSVTSIDKESREAISALHFCETFTRKTDSSPSPCLWVGTTLGTVLVIALNLPPGGEQRLLQPVIVSPSGTILRLKGAILRMAFLDTTGCLIPPAYEPWREHNVPEEKDEKEKLKKRRPVSVSPSSSQEISENQYAVICSEKQAKVISLPTQNCAYKQNITETSFVLRGDIVALSNSICLACFCANGHIMTFSLPSLRPLLDVYYLPLTNMRIARTFCFTNNGQALYLVSPTEIQRLTYSQETCENLQEMLGELFTPVETPEAPNRGFFKGLFGGGAQSLDREELFGESSSGKASRSLAQHIPGPGGIEGVKGAASGVVGELARARLALDERGQKLGDLEERTAAMLSSAESFSKHAHEIMLKYKDKKWYQF.

The disordered stretch occupies residues 14-34; the sequence is TAGSSSASQQQQQQHPPGNRE. Low complexity predominate over residues 17–27; that stretch reads SSSASQQQQQQ. WD repeat units lie at residues 61-94, 101-140, 145-181, 200-234, 240-272, 294-336, 344-378, 400-477, 505-619, and 633-695; these read SALA…CYCQ, VIQL…SLKF, VTFC…GYVI, HISD…DYRY, IHSV…PAKP, PILK…KSTA, IVDF…LIDL, TCCE…YKLK, QIIS…ELVI, and TSLA…SGAG. 2 disordered regions span residues 555-595 and 674-729; these read ETPE…GLRD and SNDP…EQKM. Serine 692 carries the phosphoserine modification. Over residues 712 to 721 the composition is skewed to low complexity; sequence SPTSGSSSPH. Serine 723 is modified (phosphoserine; by PKA). Position 759 is a phosphoserine (serine 759). Residue threonine 762 is modified to Phosphothreonine. Serine 782 is subject to Phosphoserine. Threonine 784 is modified (phosphothreonine). Serine 785 bears the Phosphoserine mark. WD repeat units follow at residues 794–851, 860–934, 939–983, and 997–1020; these read ISAL…SGTI, RMAF…QNCA, ITET…LDVY, and CFTN…TYSQ. The span at 881-892 shows a compositional bias: basic and acidic residues; that stretch reads HNVPEEKDEKEK. The tract at residues 881 to 906 is disordered; sequence HNVPEEKDEKEKLKKRRPVSVSPSSS. A phosphoserine mark is found at serine 900 and serine 902. Threonine 1039 is subject to Phosphothreonine. Residues serine 1058 and serine 1131 each carry the phosphoserine modification. The region spanning 1086–1146 is the v-SNARE coiled-coil homology domain; that stretch reads GIEGVKGAAS…HEIMLKYKDK (61 aa).

It belongs to the WD repeat L(2)GL family. As to quaternary structure, interacts with STX1A and STX1B via its v-SNARE homology domain. Part of a complex that contains STX1, STXBP5, SNAP25 and SYT1. Part of a complex that contains STXBP5, STX4A and SNAP23.

Its subcellular location is the cytoplasm. It is found in the cell membrane. The protein localises to the cytoplasmic vesicle membrane. The protein resides in the cytoplasmic vesicle. It localises to the secretory vesicle. Its subcellular location is the synaptic vesicle. It is found in the synapse. Plays a regulatory role in calcium-dependent exocytosis and neurotransmitter release. Inhibits membrane fusion between transport vesicles and the plasma membrane. May modulate the assembly of trans-SNARE complexes between transport vesicles and the plasma membrane. Inhibits translocation of GLUT4 from intracellular vesicles to the plasma membrane. Competes with STXBP1 for STX1 binding. The chain is Syntaxin-binding protein 5 (STXBP5) from Homo sapiens (Human).